We begin with the raw amino-acid sequence, 332 residues long: UDP-N-acetylenolpyruvoylglucosamine reductase (332 aa).

Residues 45-243 form the FAD-binding PCMH-type domain; sequence RAGGHAAYFY…LGTRIKTQPL (199 aa). Residue R194 is part of the active site. S250 functions as the Proton donor in the catalytic mechanism. Residue E320 is part of the active site.

This sequence belongs to the MurB family. The cofactor is FAD.

The protein localises to the cytoplasm. The catalysed reaction is UDP-N-acetyl-alpha-D-muramate + NADP(+) = UDP-N-acetyl-3-O-(1-carboxyvinyl)-alpha-D-glucosamine + NADPH + H(+). It participates in cell wall biogenesis; peptidoglycan biosynthesis. Its function is as follows. Cell wall formation. The chain is UDP-N-acetylenolpyruvoylglucosamine reductase from Nitrosomonas eutropha (strain DSM 101675 / C91 / Nm57).